We begin with the raw amino-acid sequence, 427 residues long: 2-oxoglutarate and iron-dependent oxygenase JMJD4 (427 aa).

The JmjC domain occupies 147-306 (SLVNDLEDIF…NMWHFLQQEL (160 aa)). Fe cation-binding residues include H194, D196, and H274.

Belongs to the JMJD6 family. As to quaternary structure, interacts with ETF1. Interacts with the ETF1-GSPT1 complex. Fe(2+) serves as cofactor.

The protein localises to the cytoplasm. The catalysed reaction is L-lysyl-[protein] + 2-oxoglutarate + O2 = 4-hydroxy-L-lysyl-[protein] + succinate + CO2. Catalyzes the 2-oxoglutarate and iron-dependent C4-lysyl hydroxylation of ETF1 at 'Lys-63' thereby promoting the translational termination efficiency of ETF1. Not essential for embryonic stem cell (ESC) maintenance and the embryonic and postnatal development. This chain is 2-oxoglutarate and iron-dependent oxygenase JMJD4 (Jmjd4), found in Mus musculus (Mouse).